The chain runs to 651 residues: Translation initiation factor eIF2B subunit delta (651 aa).

Residues 1 to 108 are disordered; the sequence is MSESEAKSRS…NERNVKKSTL (108 aa). N-acetylserine is present on Ser2. Residues 11–28 show a composition bias toward low complexity; it reads ATPPSKAKQATPTTTAAA. 2 stretches are compositionally biased toward basic and acidic residues: residues 30-49 and 76-90; these read GEKK…EKAA and KQLQ…EQKQ. Ser106 carries the post-translational modification Phosphoserine. Thr121 carries the phosphothreonine modification. The segment at 566-600 is disordered; sequence AMENKPKGNKIGGKKGSEGESKDASNEEDSNSKNI. Basic and acidic residues predominate over residues 580 to 590; sequence KGSEGESKDAS.

Belongs to the eIF-2B alpha/beta/delta subunits family. In terms of assembly, component of the translation initiation factor 2B (eIF2B) complex which is a heterodecamer of two sets of five different subunits: alpha, beta, gamma, delta and epsilon. Subunits alpha, beta and delta comprise a regulatory subcomplex and subunits epsilon and gamma comprise a catalytic subcomplex. Within the complex, the hexameric regulatory complex resides at the center, with the two heterodimeric catalytic subcomplexes bound on opposite sides.

The protein resides in the cytoplasm. It is found in the cytosol. Its function is as follows. Acts as a component of the translation initiation factor 2B (eIF2B) complex, which catalyzes the exchange of GDP for GTP on the eukaryotic initiation factor 2 (eIF2) complex gamma subunit. Its guanine nucleotide exchange factor activity is repressed when bound to eIF2 complex phosphorylated on the alpha subunit, thereby limiting the amount of methionyl-initiator methionine tRNA available to the ribosome and consequently global translation is repressed. It activates the synthesis of GCN4 in yeast under amino acid starvation conditions by suppressing the inhibitory effects of multiple AUG codons present in the leader of GCN4 mRNA. It may promote either repression or activation of GCN4 expression depending on amino acid availability. GCD2 is also required for cell viability. Its function can partially be replaced by GCN3 under normal growth conditions in GCD2-defective mutants, under AA starvation conditions GCN3 is an antagonist (GCN4 translational activator). This Saccharomyces cerevisiae (strain ATCC 204508 / S288c) (Baker's yeast) protein is Translation initiation factor eIF2B subunit delta (GCD2).